A 685-amino-acid polypeptide reads, in one-letter code: UvrABC system protein C (685 aa).

One can recognise a GIY-YIG domain in the interval 15-93 (ALPGVYRYFD…IKTQNPRFNI (79 aa)). In terms of domain architecture, UVR spans 214–249 (QELLQAMEARMMAYSGQLAFEQAAEVRNQMQALSRV). Low complexity predominate over residues 365-388 (AQGGDHAPAAQGGDPPPAASSGGH). Residues 365 to 391 (AQGGDHAPAAQGGDPPPAASSGGHPLR) are disordered.

It belongs to the UvrC family. As to quaternary structure, interacts with UvrB in an incision complex.

The protein localises to the cytoplasm. In terms of biological role, the UvrABC repair system catalyzes the recognition and processing of DNA lesions. UvrC both incises the 5' and 3' sides of the lesion. The N-terminal half is responsible for the 3' incision and the C-terminal half is responsible for the 5' incision. In Verminephrobacter eiseniae (strain EF01-2), this protein is UvrABC system protein C.